The following is a 98-amino-acid chain: MHYIYINIIIAFSMSLLGALLYRSHIMSSLLCLEGMMLALFVLSTLIALNMQFTLATMMPIILLVFAACEAAIGLSLLVMVSNTYGLDYVQNLNLLQC.

3 helical membrane passes run 1–21, 29–49, and 61–81; these read MHYI…GALL, SLLC…LIAL, and IILL…LVMV.

The protein belongs to the complex I subunit 4L family. As to quaternary structure, core subunit of respiratory chain NADH dehydrogenase (Complex I) which is composed of 45 different subunits.

The protein localises to the mitochondrion inner membrane. The enzyme catalyses a ubiquinone + NADH + 5 H(+)(in) = a ubiquinol + NAD(+) + 4 H(+)(out). Core subunit of the mitochondrial membrane respiratory chain NADH dehydrogenase (Complex I) which catalyzes electron transfer from NADH through the respiratory chain, using ubiquinone as an electron acceptor. Part of the enzyme membrane arm which is embedded in the lipid bilayer and involved in proton translocation. This Procavia capensis (Rock hyrax) protein is NADH-ubiquinone oxidoreductase chain 4L (MT-ND4L).